The following is a 285-amino-acid chain: MAGLGHPSAFGRATHAVVRAPPESLCRHALRRSQGEEVDFARAERQHELYVGVLGSKLGLQVVQLPADESLPDCVFVEDVAVVCEETALITRPGAPSRRKEVDMMKEALEKLQLNIVEMKDENATLDGGDVLFTGREFFVGLSKRTNQRGAEILADTFKDYAVSTVPVADSLHLKSFCSMAGPNLIAIGSSESAQKALKIMQQMSDHRYDKLTVPDDMAANCIYLNIPSKGHVLLHRTPEEYPESAKVYEKLKDHLLIPVSNSEMEKVDGLLTCCSVFINKKIDS.

Alanine 2 is modified (N-acetylalanine). Leucine 30 is a substrate binding site. Serine 33 carries the phosphoserine modification. Aspartate 73, glutamate 78, aspartate 79, arginine 98, and arginine 145 together coordinate substrate. Histidine 173 acts as the Proton donor in catalysis. S-nitrosocysteine is present on cysteine 222. Valine 268 provides a ligand contact to substrate. S-nitrosocysteine is present on cysteine 274. Cysteine 274 (nucleophile) is an active-site residue. Cysteine 274 is a Zn(2+) binding site.

It belongs to the DDAH family. Monomer. In terms of tissue distribution, detected in skeletal muscle, lung, heart, liver, kidney and brain (at protein level).

The catalysed reaction is N(omega),N(omega)-dimethyl-L-arginine + H2O = dimethylamine + L-citrulline. The enzyme catalyses N(omega)-methyl-L-arginine + H2O = L-citrulline + methylamine. Its activity is regulated as follows. Inhibited by zinc ions. Hydrolyzes N(G),N(G)-dimethyl-L-arginine (ADMA) and N(G)-monomethyl-L-arginine (MMA) which act as inhibitors of NOS. Has therefore a role in the regulation of nitric oxide generation. The chain is N(G),N(G)-dimethylarginine dimethylaminohydrolase 1 (Ddah1) from Mus musculus (Mouse).